The chain runs to 96 residues: Co-chaperonin GroES (96 aa).

It belongs to the GroES chaperonin family. As to quaternary structure, heptamer of 7 subunits arranged in a ring. Interacts with the chaperonin GroEL.

The protein resides in the cytoplasm. Functionally, together with the chaperonin GroEL, plays an essential role in assisting protein folding. The GroEL-GroES system forms a nano-cage that allows encapsulation of the non-native substrate proteins and provides a physical environment optimized to promote and accelerate protein folding. GroES binds to the apical surface of the GroEL ring, thereby capping the opening of the GroEL channel. The sequence is that of Co-chaperonin GroES from Trichlorobacter lovleyi (strain ATCC BAA-1151 / DSM 17278 / SZ) (Geobacter lovleyi).